A 286-amino-acid chain; its full sequence is Shikimate dehydrogenase (NADP(+)) (286 aa).

Shikimate-binding positions include 21-23 and T68; that span reads TLS. K72 acts as the Proton acceptor in catalysis. D84 provides a ligand contact to NADP(+). N93 and D108 together coordinate shikimate. Residues 132–136 and L226 each bind NADP(+); that span reads GYGGA. Y228 contributes to the shikimate binding site. G249 serves as a coordination point for NADP(+).

This sequence belongs to the shikimate dehydrogenase family. In terms of assembly, homodimer.

The catalysed reaction is shikimate + NADP(+) = 3-dehydroshikimate + NADPH + H(+). It functions in the pathway metabolic intermediate biosynthesis; chorismate biosynthesis; chorismate from D-erythrose 4-phosphate and phosphoenolpyruvate: step 4/7. Involved in the biosynthesis of the chorismate, which leads to the biosynthesis of aromatic amino acids. Catalyzes the reversible NADPH linked reduction of 3-dehydroshikimate (DHSA) to yield shikimate (SA). The polypeptide is Shikimate dehydrogenase (NADP(+)) (Thermosynechococcus vestitus (strain NIES-2133 / IAM M-273 / BP-1)).